The following is a 1024-amino-acid chain: Beta-galactosidase (1024 aa).

Positions 103 and 202 each coordinate substrate. Asp202 contacts Na(+). Mg(2+)-binding residues include Glu417, His419, and Glu462. Substrate contacts are provided by residues Glu462 and 538–541 (EYAH). Residue Glu462 is the Proton donor of the active site. Glu538 acts as the Nucleophile in catalysis. Asn598 provides a ligand contact to Mg(2+). Residues Phe602 and Asn605 each coordinate Na(+). Asn605 and Trp1000 together coordinate substrate.

The protein belongs to the glycosyl hydrolase 2 family. Homotetramer. Mg(2+) is required as a cofactor. The cofactor is Na(+).

The catalysed reaction is Hydrolysis of terminal non-reducing beta-D-galactose residues in beta-D-galactosides.. In Escherichia coli O157:H7, this protein is Beta-galactosidase.